A 551-amino-acid chain; its full sequence is Arginine--tRNA ligase (551 aa).

The short motif at 125 to 135 is the 'HIGH' region element; sequence ANPTGPLHIGH.

The protein belongs to the class-I aminoacyl-tRNA synthetase family. As to quaternary structure, monomer.

The protein resides in the cytoplasm. It carries out the reaction tRNA(Arg) + L-arginine + ATP = L-arginyl-tRNA(Arg) + AMP + diphosphate. The polypeptide is Arginine--tRNA ligase (Nitratidesulfovibrio vulgaris (strain DP4) (Desulfovibrio vulgaris)).